Consider the following 105-residue polypeptide: Defensin-like protein 106 (105 aa).

Residues 1 to 24 (MANTPKTLIAFVFSVIVIISYVHC) form the signal peptide. 4 disulfide bridges follow: C57-C94, C63-C87, C73-C92, and C77-C93.

Belongs to the DEFL family.

Its subcellular location is the secreted. In Arabidopsis thaliana (Mouse-ear cress), this protein is Defensin-like protein 106.